We begin with the raw amino-acid sequence, 834 residues long: Prominin-2 (834 aa).

The N-terminal stretch at 1–26 (MKHTLALLAPLLGLGLGLALSQLAAG) is a signal peptide. Residues 27–106 (ATDCKFLGPA…NEVVRYEAGY (80 aa)) lie on the Extracellular side of the membrane. A helical membrane pass occupies residues 107–127 (VVCAVIAGLYLLLVPTAGLCF). Residues 128 to 153 (CCCRCHRRCGGRVKTEHKALACERAA) lie on the Cytoplasmic side of the membrane. Residues 154-174 (LMVFLLLTTLLLLIGVVCAFV) traverse the membrane as a helical segment. Residues 175–426 (TNQRTHEQMG…EVQRYETYRW (252 aa)) lie on the Extracellular side of the membrane. An N-linked (GlcNAc...) asparagine glycan is attached at Asn-270. The chain crosses the membrane as a helical span at residues 427-447 (IVGCVLCSVVLFVVLCNLLGL). Over 448–472 (NLGIWGLSARDDPSHPEAKGEAGAR) the chain is Cytoplasmic. A helical membrane pass occupies residues 473–493 (FLMAGVGLSFLFAAPLILLVF). The Extracellular segment spans residues 494–779 (ATFLVGGNVQ…LCDMMADPWN (286 aa)). Ser-727 is subject to Phosphoserine. A helical transmembrane segment spans residues 780 to 800 (AFWFCLAWCTFFLIPSIIFAV). The Cytoplasmic segment spans residues 801–834 (KTSKYFRPIRKRLSSTSSEETQLFHIPRVTSLKL). Phosphoserine is present on Ser-818.

This sequence belongs to the prominin family. As to quaternary structure, binds cholesterol. In terms of processing, glycosylated. Present in saliva within small membrane particles (at protein level). Expressed in kidney, prostate, trachea, esophagus, salivary gland, thyroid gland, mammary gland adrenal gland, placenta, stomach, spinal cord and liver. In submucosal tumor, expressed in spindle-shaped or stellate stromal cells. Expressed in prostate cancer cell lines.

The protein resides in the apical cell membrane. It localises to the basolateral cell membrane. It is found in the cell projection. The protein localises to the microvillus membrane. Its subcellular location is the cilium membrane. The polypeptide is Prominin-2 (PROM2) (Homo sapiens (Human)).